Consider the following 205-residue polypeptide: Ribonuclease HII (205 aa).

Residues 1–205 form the RNase H type-2 domain; the sequence is MLVCGVDEAG…RPARLIEAGG (205 aa). Residues aspartate 7, glutamate 8, and aspartate 105 each coordinate a divalent metal cation.

Belongs to the RNase HII family. The cofactor is Mn(2+). Mg(2+) is required as a cofactor.

The protein localises to the cytoplasm. The catalysed reaction is Endonucleolytic cleavage to 5'-phosphomonoester.. Functionally, endonuclease that specifically degrades the RNA of RNA-DNA hybrids. The sequence is that of Ribonuclease HII from Cenarchaeum symbiosum (strain A).